The following is a 391-amino-acid chain: MRELNDVYDVVVVGAGPGGSMASYASAKNGAKTLLIEKSQEIGEPVRCAEAIPSIEEFGLKPEPEFVRNIIKGGILFSPSGKKVTVTQDKAQGYVVERKIFDKYLAIRAAKAGAKVAVKTTAIGLERDGDYWNVIVEFLGEEYVIKTKVVIAADGVESNIAEYAGLKAKKKPLEICSCAEYEMTNVELLDKNMMEFYFGNEVAPGGYVWIFPKGETANVGLGVRDKKKKAIEYLEEFIENGLAKDRLKDATPIEFKVGGAPVSGPIEKTYTDGLLVVGDAAGQISPLTGGGIYLAMDCGLIAGEVASKAIKLNDWSEETLKEYERRWKEKHYEYLMSHLKYRKILEKMSDDELDALAEALGESLDGIDLKKFVKRIITKKPSLLKYFKDLL.

Glycine 18, glutamate 37, cysteine 48, alanine 49, alanine 51, arginine 98, alanine 122, aspartate 279, glycine 291, and isoleucine 292 together coordinate FAD.

The protein belongs to the geranylgeranyl reductase family. DGGGPL reductase subfamily. The cofactor is FAD.

The enzyme catalyses a 2,3-bis-O-phytanyl-sn-glycerol 1-phospholipid + 8 A = a 2,3-bis-O-(geranylgeranyl)-sn-glycerol 1-phospholipid + 8 AH2. It catalyses the reaction 2,3-bis-O-(phytanyl)-sn-glycerol 1-phosphate + 8 A = 2,3-bis-O-(geranylgeranyl)-sn-glycerol 1-phosphate + 8 AH2. It carries out the reaction CDP-2,3-bis-O-(geranylgeranyl)-sn-glycerol + 8 AH2 = CDP-2,3-bis-O-(phytanyl)-sn-glycerol + 8 A. The catalysed reaction is archaetidylserine + 8 AH2 = 2,3-bis-O-phytanyl-sn-glycero-3-phospho-L-serine + 8 A. It functions in the pathway membrane lipid metabolism; glycerophospholipid metabolism. Is involved in the reduction of 2,3-digeranylgeranylglycerophospholipids (unsaturated archaeols) into 2,3-diphytanylglycerophospholipids (saturated archaeols) in the biosynthesis of archaeal membrane lipids. Catalyzes the formation of archaetidic acid (2,3-di-O-phytanyl-sn-glyceryl phosphate) from 2,3-di-O-geranylgeranylglyceryl phosphate (DGGGP) via the hydrogenation of each double bond of the isoprenoid chains. Is also probably able to reduce double bonds of geranyl groups in CDP-2,3-bis-O-(geranylgeranyl)-sn-glycerol and archaetidylserine, thus acting at various stages in the biosynthesis of archaeal membrane lipids. The sequence is that of Digeranylgeranylglycerophospholipid reductase from Methanocaldococcus jannaschii (strain ATCC 43067 / DSM 2661 / JAL-1 / JCM 10045 / NBRC 100440) (Methanococcus jannaschii).